We begin with the raw amino-acid sequence, 243 residues long: Pyridoxine 5'-phosphate synthase (243 aa).

Residue Asn9 participates in 3-amino-2-oxopropyl phosphate binding. 11–12 is a 1-deoxy-D-xylulose 5-phosphate binding site; sequence DH. Arg20 contacts 3-amino-2-oxopropyl phosphate. Catalysis depends on His45, which acts as the Proton acceptor. 1-deoxy-D-xylulose 5-phosphate is bound by residues Arg47 and His52. The active-site Proton acceptor is Glu72. Position 102 (Thr102) interacts with 1-deoxy-D-xylulose 5-phosphate. His193 serves as the catalytic Proton donor. Residues Gly194 and 215-216 contribute to the 3-amino-2-oxopropyl phosphate site; that span reads GH.

This sequence belongs to the PNP synthase family. Homooctamer; tetramer of dimers.

It is found in the cytoplasm. The enzyme catalyses 3-amino-2-oxopropyl phosphate + 1-deoxy-D-xylulose 5-phosphate = pyridoxine 5'-phosphate + phosphate + 2 H2O + H(+). Its pathway is cofactor biosynthesis; pyridoxine 5'-phosphate biosynthesis; pyridoxine 5'-phosphate from D-erythrose 4-phosphate: step 5/5. Catalyzes the complicated ring closure reaction between the two acyclic compounds 1-deoxy-D-xylulose-5-phosphate (DXP) and 3-amino-2-oxopropyl phosphate (1-amino-acetone-3-phosphate or AAP) to form pyridoxine 5'-phosphate (PNP) and inorganic phosphate. This Vibrio parahaemolyticus serotype O3:K6 (strain RIMD 2210633) protein is Pyridoxine 5'-phosphate synthase.